The primary structure comprises 207 residues: Ribosomal RNA small subunit methyltransferase G (207 aa).

S-adenosyl-L-methionine contacts are provided by residues Gly74, Phe79, 124-125 (VE), and Arg138.

It belongs to the methyltransferase superfamily. RNA methyltransferase RsmG family.

The protein resides in the cytoplasm. The enzyme catalyses guanosine(527) in 16S rRNA + S-adenosyl-L-methionine = N(7)-methylguanosine(527) in 16S rRNA + S-adenosyl-L-homocysteine. Specifically methylates the N7 position of guanine in position 527 of 16S rRNA. In Hyphomonas neptunium (strain ATCC 15444), this protein is Ribosomal RNA small subunit methyltransferase G.